Reading from the N-terminus, the 123-residue chain is Defensin beta 118 (123 aa).

Positions 1–19 are cleaved as a signal peptide; that stretch reads MKLLLLALPILVLLPQVIP. 3 cysteine pairs are disulfide-bonded: Cys-27/Cys-54, Cys-34/Cys-48, and Cys-38/Cys-55. Positions 65–123 are excised as a propeptide; the sequence is LPTTSPTPLSDSTPGIIDNILTIRFTTDYFEISSKKDMVEESEAGQGTQTSPPNVHHTS. The disordered stretch occupies residues 100-123; the sequence is KDMVEESEAGQGTQTSPPNVHHTS. The segment covering 109–123 has biased composition (polar residues); that stretch reads GQGTQTSPPNVHHTS.

It belongs to the beta-defensin family. The three-dimensional structure formed by the three intramolecular disulfide bridges is indispensable for antimicrobial activity. As to expression, high-level and epididymis-specific expression. Most abundant in the epithelium of the caput and is also present in the lumen and bound to sperm.

Its subcellular location is the secreted. In terms of biological role, host defense peptide that exhibits antimicrobial activity against both Gram-negative bacteria, such as E.coli and S.typhimurium, and Gram-positive bacteria, such as S.aureus and B.subtilis. Inhibits cell adhesion of E.coli on intestinal epithelial enterocytes. Causes rapid permeabilization of both the outer and inner membrane of E.coli, leading to morphological alterations on the bacterial surface. Binds to bacterial lipopolysaccharides (LPS) with high affinity, and may thereby be involved in immunoregulation through LPS neutralization. May contribute to epididymal innate immunity and protect the sperm against attack by microorganisms. The sequence is that of Defensin beta 118 (DEFB118) from Macaca mulatta (Rhesus macaque).